The chain runs to 157 residues: MLPRKVFFTKGVGRHTDPLVSFELALRDAGIEKFNLVTVSSIYPPYCEIVEAEKGLSELFPGQIVFCVMSRMTSNEQGKRIFASVGAAIPPDPSLNGYLTEYHGYCNGEDAGRHAEESAAYMLKTAFEIEPARTFNITVEADVEDCTTVVAAAVFVI.

Serine 41 carries the pyruvic acid (Ser) modification.

It belongs to the PdaD family. It depends on pyruvate as a cofactor.

The enzyme catalyses L-arginine + H(+) = agmatine + CO2. This chain is Pyruvoyl-dependent arginine decarboxylase 1 (pdaD1), found in Archaeoglobus fulgidus (strain ATCC 49558 / DSM 4304 / JCM 9628 / NBRC 100126 / VC-16).